Here is a 368-residue protein sequence, read N- to C-terminus: Peptide chain release factor 2 (368 aa).

Glutamine 250 bears the N5-methylglutamine mark.

Belongs to the prokaryotic/mitochondrial release factor family. In terms of processing, methylated by PrmC. Methylation increases the termination efficiency of RF2.

The protein localises to the cytoplasm. Peptide chain release factor 2 directs the termination of translation in response to the peptide chain termination codons UGA and UAA. The polypeptide is Peptide chain release factor 2 (Rickettsia conorii (strain ATCC VR-613 / Malish 7)).